The chain runs to 137 residues: Proofreading thioesterase EntH (137 aa).

Glutamate 63 acts as the Nucleophile or proton acceptor in catalysis.

Belongs to the thioesterase PaaI family. In terms of assembly, homotetramer. Dimer of dimers. Interacts specifically with the aryl carrier protein (ArCP) domain of EntB.

It is found in the cytoplasm. The protein operates within siderophore biosynthesis; enterobactin biosynthesis. Its function is as follows. Required for optimal enterobactin synthesis. Acts as a proofreading enzyme that prevents EntB misacylation by hydrolyzing the thioester bound existing between EntB and wrongly charged molecules. The sequence is that of Proofreading thioesterase EntH from Cronobacter sakazakii (strain ATCC BAA-894) (Enterobacter sakazakii).